A 502-amino-acid polypeptide reads, in one-letter code: Solute carrier family 2, facilitated glucose transporter member 5 (502 aa).

Methionine 1 bears the N-acetylmethionine mark. Residues 1–17 lie on the Cytoplasmic side of the membrane; it reads MEKEDQEKTGKLTLVLA. The helical transmembrane segment at 18–38 threads the bilayer; sequence LATFLAAFGSSFQYGYNVAAV. A D-fructose-binding site is contributed by tyrosine 31. The Extracellular portion of the chain corresponds to 39–67; it reads NSPSEFMQQFYNDTYYDRNKENIESFTLT. A glycan (N-linked (GlcNAc...) asparagine) is linked at asparagine 50. A helical membrane pass occupies residues 68–90; sequence LLWSLTVSMFPFGGFIGSLMVGF. Over 91–97 the chain is Cytoplasmic; the sequence is LVNNLGR. The helical transmembrane segment at 98 to 118 threads the bilayer; that stretch reads KGALLFNNIFSILPAILMGCS. The Extracellular portion of the chain corresponds to 119-125; that stretch reads KIAKSFE. Residues 126 to 148 traverse the membrane as a helical segment; that stretch reads IIIASRLLVGICAGISSNVVPMY. The Cytoplasmic segment spans residues 149–160; sequence LGELAPKNLRGA. The chain crosses the membrane as a helical span at residues 161–181; it reads LGVVPQLFITVGILVAQLFGL. D-fructose is bound at residue glutamine 166. Topologically, residues 182 to 191 are extracellular; it reads RSVLASEEGW. A helical transmembrane segment spans residues 192 to 212; the sequence is PILLGLTGVPAGLQLLLLPFF. The Cytoplasmic segment spans residues 213–276; it reads PESPRYLLIQ…LFRMQSLRWQ (64 aa). A helical transmembrane segment spans residues 277-297; sequence LISTIVLMAGQQLSGVNAIYY. Residues glutamine 287 and 295–297 each bind D-fructose; that span reads IYY. Residues 298 to 312 are Extracellular-facing; the sequence is YADQIYLSAGVKSND. The helical transmembrane segment at 313 to 333 threads the bilayer; that stretch reads VQYVTAGTGAVNVFMTMVTVF. Residues 334–341 lie on the Cytoplasmic side of the membrane; the sequence is VVELWGRR. A helical membrane pass occupies residues 342-362; the sequence is NLLLIGFSTCLTACIVLTVAL. Residues 363–370 lie on the Extracellular side of the membrane; that stretch reads ALQNTISW. A helical transmembrane segment spans residues 371 to 393; it reads MPYVSIVCVIVYVIGHAVGPSPI. Histidine 386 serves as a coordination point for D-fructose. Over 394-411 the chain is Cytoplasmic; that stretch reads PALFITEIFLQSSRPSAY. Residues 412 to 432 form a helical membrane-spanning segment; sequence MIGGSVHWLSNFIVGLIFPFI. Position 418–419 (418–419) interacts with D-fructose; sequence HW. At 433 to 438 the chain is on the extracellular side; that stretch reads QVGLGP. A helical transmembrane segment spans residues 439–459; it reads YSFIIFAIICLLTTIYIFMVV. Residues 460–502 lie on the Cytoplasmic side of the membrane; the sequence is PETKGRTFVEINQIFAKKNKVSDVYPEKEEKELNDLPPATREQ.

It belongs to the major facilitator superfamily. Sugar transporter (TC 2.A.1.1) family. Glucose transporter subfamily. Detected in jejunum. Detected in kidney, skeletal muscle, brain and adipose tissue (at protein level). Detected in small intestine and in kidney, and at much lower levels in brain. Detected in enterocytes in duodenum, jejunum, and ileum.

Its subcellular location is the apical cell membrane. The protein localises to the cell membrane. It is found in the sarcolemma. It catalyses the reaction D-fructose(out) = D-fructose(in). Its activity is regulated as follows. Fructose uptake is inhibited by mercury ions. Fructose uptake is only slightly inhibited by cytochalasin B. In terms of biological role, functions as a fructose transporter that has only low activity with other monosaccharides. Can mediate the uptake of deoxyglucose, but with low efficiency. Essential for fructose uptake in the small intestine. Plays a role in the regulation of salt uptake and blood pressure in response to dietary fructose. Required for the development of high blood pressure in response to high dietary fructose intake. In Rattus norvegicus (Rat), this protein is Solute carrier family 2, facilitated glucose transporter member 5.